Consider the following 218-residue polypeptide: Probable transaldolase (218 aa).

K87 functions as the Schiff-base intermediate with substrate in the catalytic mechanism.

Belongs to the transaldolase family. Type 3B subfamily.

The protein resides in the cytoplasm. It carries out the reaction D-sedoheptulose 7-phosphate + D-glyceraldehyde 3-phosphate = D-erythrose 4-phosphate + beta-D-fructose 6-phosphate. It functions in the pathway carbohydrate degradation; pentose phosphate pathway; D-glyceraldehyde 3-phosphate and beta-D-fructose 6-phosphate from D-ribose 5-phosphate and D-xylulose 5-phosphate (non-oxidative stage): step 2/3. Transaldolase is important for the balance of metabolites in the pentose-phosphate pathway. The protein is Probable transaldolase of Bacteroides fragilis (strain YCH46).